Reading from the N-terminus, the 131-residue chain is Profilin-2 (131 aa).

This sequence belongs to the profilin family. In terms of assembly, occurs in many kinds of cells as a complex with monomeric actin in a 1:1 ratio. In terms of tissue distribution, expressed in the intestinal wall, the spermatheca, and the pharynx.

The protein localises to the cytoplasm. The protein resides in the cytoskeleton. Binds to actin and affects the structure of the cytoskeleton. At high concentrations, profilin prevents the polymerization of actin, whereas it enhances it at low concentrations. By binding to PIP2, it inhibits the formation of IP3 and DG. The polypeptide is Profilin-2 (pfn-2) (Caenorhabditis elegans).